Consider the following 512-residue polypeptide: MQQPVVRVGEWLVTPSINQISRNGRQLTLEPRLIDLLVFFAQHSGEVLSRDELIDNVWKRSIVTNHVVTQSISELRKSLKDNDEDSPVYIATVPKRGYKLMVPVIWYSEEEGEEIMLSSPPPIPEAVPATDSPSHSLNIQNTATPPEQSPVKSKRFTTFWVWFFFLLSLGICVALVAFSSLDTRLPMSKSRILLNPRDIDINMVNKSCNSWSSPYQLSYAIGVGDLVATSLNTFSTFMVHDKINYNIDEPSSSGKTLSIAFVNQRQYRAQQCFMSIKLVDNADGSTMLDKRYVITNGNQLAIQNDLLESLSKALNQPWPQRMQETLQKILPHRGALLTNFYQAHDYLLHGDDKSLNRASELLGEIVQSSPEFTYARAEKALVDIVRHSQHPLDEKQLAALNTEIDNIVTLPELNNLSIIYQIKAVSALVKGKTDESYQAINTGIDLEMSWLNYVLLGKVYEMKGMNREAADAYLTAFNLRPGANTLYWIENGIFQTSVPYVVPYLDKFLASE.

At 1–154 (MQQPVVRVGE…PPEQSPVKSK (154 aa)) the chain is on the cytoplasmic side. The ompR/PhoB-type DNA-binding region spans 3–102 (QPVVRVGEWL…VPKRGYKLMV (100 aa)). The helical transmembrane segment at 155–180 (RFTTFWVWFFFLLSLGICVALVAFSS) threads the bilayer. At 181–512 (LDTRLPMSKS…PYLDKFLASE (332 aa)) the chain is on the periplasmic side. Cysteines 208 and 272 form a disulfide.

Homodimer. Dimerization of the periplasmic domain is required for activation of the cadBA operon. Interacts strongly with the lysine permease LysP in the absence of lysine or at low lysine concentrations. Interaction is markedly attenuated under increasing lysine levels. Concomitant pH-dependent protonation of periplasmic amino acids in both proteins dissolves their electrostatic connections resulting in further destabilization of the CadC/LysP interaction. In terms of processing, contains a functionally important disulfide bond, which may provide structural support for the pH-dependent activation via a switch of the sensor between the inactive and active state.

It localises to the cell inner membrane. With respect to regulation, activation of CadC requires two stimuli, lysine and low pH. CadC shows an extremely low affinity for lysine, and it senses the extracellular lysine not directly but indirectly via interaction with the lysine permease LysP. At a low external lysine concentration, CadC is inactivated by an interaction with LysP. When lysine is abundantly available, the interaction between LysP and CadC is released, and CadC becomes susceptible to activation by low pH. Acidification of the external milieu is sensed by protonation of a patch of acidic amino acids within the periplasmic domain and associated to conformational and/or oligomerization effects. The pH-dependent regulation may be due to the presence/absence of a disulfide bond within the periplasmic domain. At pH 7.6, a disulfide bond is found in the inactive state of CadC. At pH 5.8, disulfide bond formation is prevented, which transforms CadC into a semi-active state with respect to both the pH and the lysine stimuli. Activity is also feedback inhibited by cadaverine. Cadaverine binds first to the central cavity, which putatively triggers intramolecular rearrangements to expose the binding sites for cadaverine at the dimer interface, which inactivates CadC and consequently shuts off transcription of the cadBA operon. Its function is as follows. Regulates the lysine- and pH-dependent expression of the lysine decarboxylase CadA and the cadaverine-lysine antiporter CadB. At low external pH, and in the presence of external lysine, CadC activates transcription of the cadBA operon by binding directly to two sites, Cad1 and Cad2, within the cadBA promoter region (Pcad). Preferentially binds to AT-rich regions within the Cad1 promoter. The protein is Transcriptional activator CadC (cadC) of Escherichia coli (strain K12).